The sequence spans 502 residues: Hexose transporter 1 (502 aa).

The Cytoplasmic portion of the chain corresponds to 1–26 (MKKSSKEISSSQSLKNGGSDHFFNTS). The helical transmembrane segment at 27-47 (LMYVLAACLASFIFGYQVSVL) threads the bilayer. Residues 48–76 (NTIKNFIVIEFGWCTGNKVECDDSTLKSS) lie on the Extracellular side of the membrane. An intrachain disulfide couples Cys61 to Cys68. A helical transmembrane segment spans residues 77 to 97 (FLLASVFIGAVVGSGFSGYLV). Over 98–102 (QHGRR) the chain is Cytoplasmic. A helical transmembrane segment spans residues 103-123 (FSLLVIYNFFILVSILTSITH). Over 124–132 (HFHTILFSR) the chain is Extracellular. The helical transmembrane segment at 133–153 (LLSGFGIGLITVSVPMYISEM) threads the bilayer. Residues 154 to 163 (THKDKKGAYG) lie on the Cytoplasmic side of the membrane. A helical membrane pass occupies residues 164–184 (VLHQLFITFGIFVAVLLGMAM). Residue Gln167 participates in alpha-D-glucose binding. Gln167 provides a ligand contact to beta-D-glucose. At 185 to 205 (GEAPDAKSVDALGEFQKIWWR) the chain is on the extracellular side. The chain crosses the membrane as a helical span at residues 206 to 226 (LMFFFPCLISILGIVLLTFFY). The Cytoplasmic portion of the chain corresponds to 227 to 291 (KEETPYYLFE…RAMQIPSYRN (65 aa)). A helical membrane pass occupies residues 292–312 (VILLGCILSGLQQFTGINVLV). Alpha-D-glucose contacts are provided by Gln303, Gln304, and Asn309. Gln303 provides a ligand contact to beta-D-glucose. Asn309 lines the beta-D-glucose pocket. Over 313–329 (SNSNELYKEFLSNKLIT) the chain is Extracellular. Residues 330-350 (TLSVIMTVVNFLMTFPAIYIV) form a helical membrane-spanning segment. Asn339 contributes to the beta-D-glucose binding site. The Cytoplasmic portion of the chain corresponds to 351–356 (EKLGRK). The chain crosses the membrane as a helical span at residues 357-377 (TLLLCGCAGVICAFLPTAIAN). Residues 378–390 (QIDSTSAFVKNLS) lie on the Extracellular side of the membrane. Residues 391 to 411 (IAATFVMIISFAVSYGPVLWI) form a helical membrane-spanning segment. An alpha-D-glucose-binding site is contributed by Trp410. The Cytoplasmic segment spans residues 412–427 (YLHEMFPSEIKDSAAS). A helical membrane pass occupies residues 428-448 (LASLVNWVCAIIVVFPSDIII). Topologically, residues 449-453 (KKSPT) are extracellular. The helical transmembrane segment at 454–474 (ILFFIFSGMSILSFLFIFFFI) threads the bilayer. Residues 475-502 (KETKGGEIGTSPYITMEERQKHMGKSAV) lie on the Cytoplasmic side of the membrane.

Belongs to the major facilitator superfamily. Sugar transporter (TC 2.A.1.1) family. Homodimer.

Its subcellular location is the cell membrane. The enzyme catalyses D-glucose(out) = D-glucose(in). It carries out the reaction D-fructose(out) = D-fructose(in). It catalyses the reaction D-galactose(in) = D-galactose(out). The catalysed reaction is D-mannose(out) = D-mannose(in). The enzyme catalyses D-glucosamine(out) = D-glucosamine(in). It carries out the reaction D-xylose(out) = D-xylose(in). Inhibited by compound 3361 (3-O-((undec-10-en)-1-yl)-D-glucose). Functionally, sodium-independent facilitative hexose transporter. Can transport D-glucose and D-fructose. Can transport D-mannose, D-galactose, D-xylose and D-glucosamine. This Plasmodium vivax (strain Brazil I) protein is Hexose transporter 1.